Here is a 295-residue protein sequence, read N- to C-terminus: Tyrosine recombinase XerC (295 aa).

The region spanning 1-85 (MQTYLQKYWN…ALRQFLAFLV (85 aa)) is the Core-binding (CB) domain. Residues 106-285 (HLPKNINAEQ…NFQHLAEVYD (180 aa)) enclose the Tyr recombinase domain. Catalysis depends on residues Arg-145, Lys-169, His-237, Arg-240, and His-263. Tyr-272 acts as the O-(3'-phospho-DNA)-tyrosine intermediate in catalysis.

The protein belongs to the 'phage' integrase family. XerC subfamily. In terms of assembly, forms a cyclic heterotetrameric complex composed of two molecules of XerC and two molecules of XerD.

The protein localises to the cytoplasm. Its function is as follows. Site-specific tyrosine recombinase, which acts by catalyzing the cutting and rejoining of the recombining DNA molecules. The XerC-XerD complex is essential to convert dimers of the bacterial chromosome into monomers to permit their segregation at cell division. It also contributes to the segregational stability of plasmids. The polypeptide is Tyrosine recombinase XerC (Mannheimia succiniciproducens (strain KCTC 0769BP / MBEL55E)).